A 27-amino-acid chain; its full sequence is Cupiennin-4a (27 aa).

E27 carries the post-translational modification Glutamic acid 1-amide.

Expressed by the venom gland.

The protein resides in the secreted. The polypeptide is Cupiennin-4a (Cupiennius salei (American wandering spider)).